The chain runs to 561 residues: Putative transport protein YbjL (561 aa).

Transmembrane regions (helical) follow at residues 8-28, 32-52, 66-86, 94-114, and 158-178; these read LLNG…LCLG, LGSV…LLGQ, FMLF…SIFF, MLAL…GKLF, and NLSL…IVGA. RCK C-terminal domains lie at 200–288 and 292–373; these read RGLD…SFRN and VFDR…RIGF. The next 5 helical transmembrane spans lie at 383–403, 406–426, 447–467, 475–495, and 540–560; these read LLAF…TFQF, FSFG…LGFL, FGLM…INNG, MLIA…LFGA, and AIAN…WPGL.

The protein belongs to the AAE transporter (TC 2.A.81) family. YbjL subfamily.

It is found in the cell membrane. The sequence is that of Putative transport protein YbjL from Salmonella paratyphi C (strain RKS4594).